The chain runs to 436 residues: Mitochondrial distribution and morphology protein 12 (436 aa).

One can recognise an SMP-LTD domain in the interval 1-436 (MSIEVNWGTA…VFPSFYTFLI (436 aa)). Over residues 73–84 (DEDGDSGSEISE) the composition is skewed to acidic residues. Disordered stretches follow at residues 73–98 (DEDG…WDRT), 184–275 (AVAG…RMRE), and 352–380 (GSGS…PHQK). The span at 85-98 (ELQHRTHDNPWDRT) shows a compositional bias: basic and acidic residues. Polar residues-rich tracts occupy residues 190–206 (PFTT…QGNK) and 222–243 (DSSN…SNRS). Positions 244–255 (SHPDGHPEHNDD) are enriched in basic and acidic residues. Residues 256 to 267 (PISSSENPLLQN) are compositionally biased toward polar residues.

Belongs to the MDM12 family. In terms of assembly, component of the ER-mitochondria encounter structure (ERMES) or MDM complex, composed of mmm1, mdm10, mdm12 and mdm34. A mmm1 homodimer associates with one molecule of mdm12 on each side in a pairwise head-to-tail manner, and the SMP-LTD domains of mmm1 and mdm12 generate a continuous hydrophobic tunnel for phospholipid trafficking.

It localises to the mitochondrion outer membrane. The protein resides in the endoplasmic reticulum membrane. In terms of biological role, component of the ERMES/MDM complex, which serves as a molecular tether to connect the endoplasmic reticulum (ER) and mitochondria. Components of this complex are involved in the control of mitochondrial shape and protein biogenesis, and function in nonvesicular lipid trafficking between the ER and mitochondria. Mdm12 is required for the interaction of the ER-resident membrane protein mmm1 and the outer mitochondrial membrane-resident beta-barrel protein mdm10. The mdm12-mmm1 subcomplex functions in the major beta-barrel assembly pathway that is responsible for biogenesis of all mitochondrial outer membrane beta-barrel proteins, and acts in a late step after the SAM complex. The mdm10-mdm12-mmm1 subcomplex further acts in the TOM40-specific pathway after the action of the mdm12-mmm1 complex. Essential for establishing and maintaining the structure of mitochondria and maintenance of mtDNA nucleoids. The chain is Mitochondrial distribution and morphology protein 12 from Emericella nidulans (strain FGSC A4 / ATCC 38163 / CBS 112.46 / NRRL 194 / M139) (Aspergillus nidulans).